A 382-amino-acid polypeptide reads, in one-letter code: S-adenosylmethionine decarboxylase proenzyme (382 aa).

Residue phenylalanine 32 coordinates substrate. Catalysis depends on residues glutamate 33 and glutamate 36. Leucine 87 provides a ligand contact to substrate. The active-site Schiff-base intermediate with substrate; via pyruvic acid is the serine 90. Serine 90 bears the Pyruvic acid (Ser); by autocatalysis mark. The active-site Proton donor; for catalytic activity is the cysteine 104. Phenylalanine 248 is a substrate binding site. Catalysis depends on proton acceptor; for processing activity residues serine 254 and histidine 267. Residue glutamate 271 participates in substrate binding.

Belongs to the eukaryotic AdoMetDC family. In terms of assembly, heterotetramer of two alpha and two beta chains. Pyruvate is required as a cofactor. Post-translationally, is synthesized initially as an inactive proenzyme. Formation of the active enzyme involves a self-maturation process in which the active site pyruvoyl group is generated from an internal serine residue via an autocatalytic post-translational modification. Two non-identical subunits are generated from the proenzyme in this reaction, and the pyruvate is formed at the N-terminus of the alpha chain, which is derived from the carboxyl end of the proenzyme. The post-translation cleavage follows an unusual pathway, termed non-hydrolytic serinolysis, in which the side chain hydroxyl group of the serine supplies its oxygen atom to form the C-terminus of the beta chain, while the remainder of the serine residue undergoes an oxidative deamination to produce ammonia and the pyruvoyl group blocking the N-terminus of the alpha chain.

It catalyses the reaction S-adenosyl-L-methionine + H(+) = S-adenosyl 3-(methylsulfanyl)propylamine + CO2. It functions in the pathway amine and polyamine biosynthesis; S-adenosylmethioninamine biosynthesis; S-adenosylmethioninamine from S-adenosyl-L-methionine: step 1/1. The sequence is that of S-adenosylmethionine decarboxylase proenzyme from Leishmania donovani.